Consider the following 297-residue polypeptide: UDP-3-O-acyl-N-acetylglucosamine deacetylase (297 aa).

The Zn(2+) site is built by His-77, His-236, and Asp-240. His-263 serves as the catalytic Proton donor.

Belongs to the LpxC family. Zn(2+) is required as a cofactor.

The enzyme catalyses a UDP-3-O-[(3R)-3-hydroxyacyl]-N-acetyl-alpha-D-glucosamine + H2O = a UDP-3-O-[(3R)-3-hydroxyacyl]-alpha-D-glucosamine + acetate. It functions in the pathway glycolipid biosynthesis; lipid IV(A) biosynthesis; lipid IV(A) from (3R)-3-hydroxytetradecanoyl-[acyl-carrier-protein] and UDP-N-acetyl-alpha-D-glucosamine: step 2/6. In terms of biological role, catalyzes the hydrolysis of UDP-3-O-myristoyl-N-acetylglucosamine to form UDP-3-O-myristoylglucosamine and acetate, the committed step in lipid A biosynthesis. This Psychrobacter sp. (strain PRwf-1) protein is UDP-3-O-acyl-N-acetylglucosamine deacetylase.